Reading from the N-terminus, the 398-residue chain is Acetate kinase (398 aa).

Asn-8 is a binding site for Mg(2+). Position 15 (Lys-15) interacts with ATP. Residue Arg-89 coordinates substrate. Catalysis depends on Asp-146, which acts as the Proton donor/acceptor. ATP is bound by residues 206–210 (HIGNG), 283–285 (DMR), and 331–335 (GMGEN). Mg(2+) is bound at residue Glu-383.

Belongs to the acetokinase family. In terms of assembly, homodimer. The cofactor is Mg(2+). It depends on Mn(2+) as a cofactor.

Its subcellular location is the cytoplasm. It catalyses the reaction acetate + ATP = acetyl phosphate + ADP. Its pathway is metabolic intermediate biosynthesis; acetyl-CoA biosynthesis; acetyl-CoA from acetate: step 1/2. Its function is as follows. Catalyzes the formation of acetyl phosphate from acetate and ATP. Can also catalyze the reverse reaction. The sequence is that of Acetate kinase from Streptococcus pyogenes serotype M49 (strain NZ131).